The sequence spans 830 residues: MLNEGKVLPVDISSEMKKCYIDYAMSVIVSRALPDVRDGLKPVHRRILYSMHELGLTPEKGYRKCARIVGDVLGKYHPHGDSSVYGALVRLAQDFNLRYTVVDGHGNFGSVDGDSAAAMRYTEAKMNKIALEMVRDIGKNTVDFIPNFDGEEKEPVVLPSRFPNLLVNGSAGIAVGMATNIPPHNLGEVIDGITMLIDNPEATILELMAQIKGPDFPTAGIIMGKSGIRAAYETGRGKITVRAKSEIEVEDNGKQKIIITEIPYQVNKARLVESIADLVKDKRIVGISDLRDESDRDGMRIVIEIKKDANSNIILNQLYKHTRLQDTFGINMLALVDNRPEVLNLKQILQHYIKFQEQVIRRRTEFDLEKASARAHILEGLKIALDHIDEVISLIRGSKTAQEAKLGLMDKFGLSEKQAQAILDLKLQRLTGLEREKIEDEYNELMKTIAELKSILADENKILAIIRDELNEIKAKYGDERKTAIERAENDIDIEDLIQEENVVITLTHAGYIKRINADTYTSQKRGGRGIQAMTTKEDDFVENIFITSTHNNILFFTNKGRMYKLKAYQIPEAGRAAKGTNVVNLLQLDPNEKIQAVISIKEFDEESFLVMCTKKGIIKKTVVGMYKNIRKSGLIAINLNDDDELVSVRITKGDDDIIIVTNKGLAIRFNEVDVRPLGRNALGVKGITLKEDDFVVGMEVPNQESDVLVVSENGFGKRTHVGEYKCQHRGGKGLITYKVSDKTGKLVGVRMVEDGDELMLINNLGIAIRINVSDISTTSRNAMGVTLMRNNGDEKVLALAKINKDDSEQLEDSEEVSEVHDAEENNSEE.

Residues 33 to 497 (LPDVRDGLKP…AENDIDIEDL (465 aa)) form the Topo IIA-type catalytic domain. The O-(5'-phospho-DNA)-tyrosine intermediate role is filled by Y121. Residues 524–530 (QKRGGRG) carry the GyrA-box motif. Residues 805-830 (KDDSEQLEDSEEVSEVHDAEENNSEE) are disordered.

Belongs to the type II topoisomerase GyrA/ParC subunit family. As to quaternary structure, heterotetramer, composed of two GyrA and two GyrB chains. In the heterotetramer, GyrA contains the active site tyrosine that forms a transient covalent intermediate with DNA, while GyrB binds cofactors and catalyzes ATP hydrolysis.

It localises to the cytoplasm. The enzyme catalyses ATP-dependent breakage, passage and rejoining of double-stranded DNA.. In terms of biological role, a type II topoisomerase that negatively supercoils closed circular double-stranded (ds) DNA in an ATP-dependent manner to modulate DNA topology and maintain chromosomes in an underwound state. Negative supercoiling favors strand separation, and DNA replication, transcription, recombination and repair, all of which involve strand separation. Also able to catalyze the interconversion of other topological isomers of dsDNA rings, including catenanes and knotted rings. Type II topoisomerases break and join 2 DNA strands simultaneously in an ATP-dependent manner. The polypeptide is DNA gyrase subunit A (Clostridium acetobutylicum (strain ATCC 824 / DSM 792 / JCM 1419 / IAM 19013 / LMG 5710 / NBRC 13948 / NRRL B-527 / VKM B-1787 / 2291 / W)).